Here is a 483-residue protein sequence, read N- to C-terminus: ATP synthase subunit beta (483 aa).

Position 169-176 (169-176 (GGAGVGKT)) interacts with ATP.

The protein belongs to the ATPase alpha/beta chains family. In terms of assembly, F-type ATPases have 2 components, CF(1) - the catalytic core - and CF(0) - the membrane proton channel. CF(1) has five subunits: alpha(3), beta(3), gamma(1), delta(1), epsilon(1). CF(0) has three main subunits: a(1), b(2) and c(9-12). The alpha and beta chains form an alternating ring which encloses part of the gamma chain. CF(1) is attached to CF(0) by a central stalk formed by the gamma and epsilon chains, while a peripheral stalk is formed by the delta and b chains.

It localises to the cell membrane. It catalyses the reaction ATP + H2O + 4 H(+)(in) = ADP + phosphate + 5 H(+)(out). Produces ATP from ADP in the presence of a proton gradient across the membrane. The catalytic sites are hosted primarily by the beta subunits. In Corynebacterium glutamicum (strain R), this protein is ATP synthase subunit beta.